The primary structure comprises 439 residues: Histone acetyltransferase GCN5 (439 aa).

2 stretches are compositionally biased toward basic and acidic residues: residues 1 to 28 (MVTK…KLEN) and 39 to 59 (ETNK…KETE). The interval 1–59 (MVTKHQIEEDHLDGATTDPEVKRVKLENNVEEIQPEQAETNKQEGTDKENKGKFEKETE) is disordered. The N-acetyltransferase domain maps to 100–255 (IEFRVVNNDN…GGTLMQCSML (156 aa)). The active-site Proton donor/acceptor is E173. Acetyl-CoA contacts are provided by residues 177-179 (CAI), 184-190 (QVRGYGA), and 216-219 (YAIG). A Bromo domain is found at 327–431 (PKRGPHDAAI…KFFNNKVKEI (105 aa)).

Belongs to the acetyltransferase family. GCN5 subfamily. As to quaternary structure, component of the 1.8 MDa SAGA (Spt-Ada-Gcn5 acetyltransferase) complex, which is composed of 19 subunits TRA1, SPT7, TAF5, NGG1/ADA3, SGF73, SPT20/ADA5, SPT8, TAF12, TAF6, HFI1/ADA1, UBP8, GCN5, ADA2, SPT3, SGF29, TAF10, TAF9, SGF11 and SUS1. The SAGA complex is composed of 4 modules, namely the HAT (histone acetyltransferase) module (GCN5, ADA2, NGG1/ADA3 and SGF29), the DUB (deubiquitinating) module (UBP8, SGF11, SGF73 and SUS1), the core or TAF (TBP-associated factor) module (TAF5, TAF6, TAF9, TAF10 and TAF12), and the Tra1 or SPT (Suppressor of Ty) module (TRA1, HFI1/ADA1, SPT3, SPT7, SPT8 and SPT20/ADA5). The Tra1/SPT module binds activators, the core module recruits TBP (TATA-binding protein), the HAT module contains the histone H3 acetyltransferase GCN5, and the DUB module comprises the histone H2B deubiquitinase UBP8. Also identified in an altered form of SAGA, named SALSA (SAGA altered, Spt8 absent) or SLIK (SAGA-like) complex, which contains a C-terminal truncated form of SPT7 and is missing SPT8. However, it has been shown that the SAGA and SAGA-like SALSA/SLIK transcriptional coactivators are structurally and biochemically equivalent. Component of the 0.8 MDa ADA complex, a HAT complex distinct from SAGA, which at least consists of ADA2, NGG1/ADA3, AHC1, AHC2, SGF29 and GCN5. Component of an ADA/GCN5 complex that consists of HFI1/ADA1, ADA2, NGG1/ADA3, SPT20/ADA5 and GCN5 and probably is a subcomplex of SAGA.

The protein resides in the nucleus. The protein localises to the cytoplasm. It carries out the reaction L-lysyl-[protein] + acetyl-CoA = N(6)-acetyl-L-lysyl-[protein] + CoA + H(+). It catalyses the reaction (2E)-butenoyl-CoA + L-lysyl-[protein] = N(6)-(2E)-butenoyl-L-lysyl-[protein] + CoA + H(+). In terms of biological role, histone acetyltransferase that acetylates histone H2B to form H2BK11ac and H2BK16ac, histone H3 to form H3K9ac, H3K14ac, H3K18ac, H3K23ac, H3K27ac and H3K36ac, with a lower preference histone H4 to form H4K8ac and H4K16ac, and contributes to H2A.Z acetylation. Acetylation of histones gives a specific tag for epigenetic transcription activation and elongation. Operates in concert with certain DNA-binding transcriptional activators such as GCN4 or HAP2/3/4. Its acetyltransferase activity seems to be dependent on the association in different multisubunit complexes. Component of the transcription coactivator SAGA complex. SAGA acts as a general cofactor required for essentially all RNA polymerase II transcription. At the promoters, SAGA is required for transcription pre-initiation complex (PIC) recruitment. It influences RNA polymerase II transcriptional activity through different activities such as TBP interaction (via core/TAF module) and promoter selectivity, interaction with transcription activators (via Tra1/SPT module), and chromatin modification through histone acetylation (via HAT module) and deubiquitination (via DUB module). SAGA preferentially acetylates histones H3 (to form H3K9ac, H3K14ac, H3K18ac and H3K23ac) and H2B and deubiquitinates histone H2B. SAGA interacts with DNA via upstream activating sequences (UASs). Also identified in a modified version of SAGA named SALSA or SLIK. The cleavage of SPT7 and the absence of the SPT8 subunit in SLIK neither drive any major conformational differences in its structure compared with SAGA, nor significantly affect HAT, DUB, or DNA-binding activities. Component of the ADA histone acetyltransferase complex, which preferentially acetylates nucleosomal histones H3 (to form H3K14ac and H3K18ac) and H2B. In addition to histone acetyltransferase, can use different acyl-CoA substrates, such as (2E)-butenoyl-CoA (crotonyl-CoA) and is able to mediate histone crotonylation. Controls the metaphase-to-anaphase transition and is required for correct chromosome segregation and centromere/kinetochore function in mitosis. May be involved in response to DNA damage by genotoxic agents. This is Histone acetyltransferase GCN5 from Saccharomyces cerevisiae (strain ATCC 204508 / S288c) (Baker's yeast).